The primary structure comprises 86 residues: Beta-toxin Tz1 (86 aa).

Residues 1–20 (MTRFVLFICCFFLIGMVVEC) form the signal peptide. Positions 21-83 (KDGYLVGNDG…TWDRATNRCG (63 aa)) constitute an LCN-type CS-alpha/beta domain. 4 disulfide bridges follow: cysteine 31–cysteine 82, cysteine 35–cysteine 57, cysteine 43–cysteine 63, and cysteine 47–cysteine 65. At arginine 84 the chain carries Arginine amide.

The protein belongs to the long (4 C-C) scorpion toxin superfamily. Sodium channel inhibitor family. Beta subfamily. In terms of tissue distribution, expressed by the venom gland.

The protein localises to the secreted. Its function is as follows. Beta toxins bind voltage-independently at site-4 of sodium channels (Nav) and shift the voltage of activation toward more negative potentials thereby affecting sodium channel activation and promoting spontaneous and repetitive firing. Strongly affects skeletal muscle channels Nav1.4/SCN4A, poorly affects the neuronal channels Nav1.6/SCN8A and Nav1.2/SCN2A. Induces spastic paralysis of rear limbs, increased salivation, apnea, tachycardia and increased perspiration. In Tityus zulianus (Venezuelan scorpion), this protein is Beta-toxin Tz1.